The chain runs to 592 residues: 2-succinyl-5-enolpyruvyl-6-hydroxy-3-cyclohexene-1-carboxylate synthase (592 aa).

Belongs to the TPP enzyme family. MenD subfamily. Homodimer. Mg(2+) is required as a cofactor. Mn(2+) serves as cofactor. It depends on thiamine diphosphate as a cofactor.

It carries out the reaction isochorismate + 2-oxoglutarate + H(+) = 5-enolpyruvoyl-6-hydroxy-2-succinyl-cyclohex-3-ene-1-carboxylate + CO2. Its pathway is quinol/quinone metabolism; 1,4-dihydroxy-2-naphthoate biosynthesis; 1,4-dihydroxy-2-naphthoate from chorismate: step 2/7. It functions in the pathway quinol/quinone metabolism; menaquinone biosynthesis. Its function is as follows. Catalyzes the thiamine diphosphate-dependent decarboxylation of 2-oxoglutarate and the subsequent addition of the resulting succinic semialdehyde-thiamine pyrophosphate anion to isochorismate to yield 2-succinyl-5-enolpyruvyl-6-hydroxy-3-cyclohexene-1-carboxylate (SEPHCHC). This is 2-succinyl-5-enolpyruvyl-6-hydroxy-3-cyclohexene-1-carboxylate synthase from Haloarcula marismortui (strain ATCC 43049 / DSM 3752 / JCM 8966 / VKM B-1809) (Halobacterium marismortui).